A 462-amino-acid chain; its full sequence is Tryptophan dimethylallyltransferase ifgA (462 aa).

L-tryptophan-binding positions include 83-84 (IL) and glutamate 92. Arginine 103, lysine 189, and tyrosine 191 together coordinate substrate. Positions 193 and 246 each coordinate L-tryptophan. Substrate is bound by residues arginine 259, lysine 261, tyrosine 263, glutamine 345, and tyrosine 347.

Belongs to the tryptophan dimethylallyltransferase family. Homodimer.

It catalyses the reaction L-tryptophan + dimethylallyl diphosphate = 4-(3-methylbut-2-enyl)-L-tryptophan + diphosphate. Its pathway is alkaloid biosynthesis; ergot alkaloid biosynthesis. Functionally, tryptophan dimethylallyltransferase; part of the gene cluster that mediates the biosynthesis of isofumigaclavines, fungal ergot alkaloids. The tryptophan dimethylallyltransferase ifgA catalyzes the first step of ergot alkaloid biosynthesis by condensing dimethylallyl diphosphate (DMAP) and tryptophan to form 4-dimethylallyl-L-tryptophan. The second step is catalyzed by the methyltransferase ifgB that methylates 4-dimethylallyl-L-tryptophan in the presence of S-adenosyl-L-methionine, resulting in the formation of N-methyl-dimethylallyl-L-tryptophan. The catalase ifgD and the FAD-dependent oxidoreductase ifgC then transform N-methyl-dimethylallyl-L-tryptophan to chanoclavine-I which is further oxidized by ifgE in the presence of NAD(+), resulting in the formation of chanoclavine-I aldehyde. The chanoclavine-I aldehyde reductases ifgG and/or fgaOx3 reduce chanoclavine-I aldehyde to dihydrochanoclavine-I aldehyde that spontaneously dehydrates to form 6,8-dimethyl-6,7-didehydroergoline. The festuclavine dehydrogenases ifgF1 and/or ifgF2 then catalyze the reduction of 6,8-dimethyl-6,7-didehydroergoline to form festuclavine. Hydrolysis of festuclavine by a yet undetermined cytochrome P450 monooxygenase (called ifgH) then leads to the formation of isofumigaclavine B which is in turn acetylated by ifgI to isofumigaclavine A. Penicillium roqueforti has interestingly at least two sets of genes for the consumption of chanoclavine-I aldehyde on three different loci, the OYEs ifgG/fgaOx3 and the festuclavine synthase homologs ifgF1/ifgF2. The reason for the duplication of these genes is unclear, probably to ensure the conversion of chanoclavine-I aldehyde by differential gene expression under various environmental conditions. The protein is Tryptophan dimethylallyltransferase ifgA of Penicillium roqueforti (strain FM164).